We begin with the raw amino-acid sequence, 801 residues long: H(+)/Cl(-) exchange transporter 3 (801 aa).

Over 1 to 125 (MESEQLFHRG…WEMTKSLYDA (125 aa)) the chain is Cytoplasmic. Short sequence motifs (di-leucine internalization motif; mediates targeting to late endosome and lysosome membranes) lie at residues 28–29 (LL), 46–47 (LL), and 71–75 (LLDLL). Residues 126–163 (WSGWLVVTLTGLASGALAGLIDIAADWMTDLKEGICLS) traverse the membrane as a helical segment. Asn-177 carries N-linked (GlcNAc...) asparagine glycosylation. The helical transmembrane segment at 209 to 232 (MNYIMYIFWALSFAFLAVSLVKVF) threads the bilayer. Residues 238–242 (GSGIP) carry the Selectivity filter part_1 motif. Ser-239 is a chloride binding site. An intramembrane region (helical) is located at residues 241 to 248 (IPEIKTIL). Helical transmembrane passes span 258 to 276 (GKWTLMIKTVTLVLAVASG) and 282 to 301 (EGPLVHVACCCGNIFSYLFP). Residues 280–284 (GKEGP) carry the Selectivity filter part_2 motif. 2 consecutive intramembrane regions (helical) follow at residues 313–325 (VLSAASAAGVSVA) and 329–337 (PIGGVLFSL). The next 3 membrane-spanning stretches (helical) occupy residues 349-367 (LWRSFFAALVAAFVLRSIN), 391-416 (FPFILLGVFGGLWGAFFIRANIAWCR), and 423-443 (FGKYPVLEVIIVAAITAVIAF). N-linked (GlcNAc...) asparagine glycans are attached at residues Asn-451 and Asn-479. A helical membrane pass occupies residues 500 to 520 (IWQLCLALIFKIIMTVFTFGI). A Selectivity filter part_3 motif is present at residues 525–529 (GLFIP). Residue Phe-527 participates in chloride binding. 2 intramembrane regions (helical) span residues 555-569 (GLYAMVGAAACLGGV) and 573-584 (TVSLVVIVFELT). An intramembrane region (note=Loop between two helices) is located at residues 585–588 (GGLE). A helical transmembrane segment spans residues 589-607 (YIVPLMAAVMTSKWVGDAF). Over 608–801 (GREGIYEAHI…NQDPASIMFN (194 aa)) the chain is Cytoplasmic. Tyr-613 is a chloride binding site. 2 consecutive CBS domains span residues 641–705 (MRPR…ARKK) and 738–795 (LDMS…NQDP). Residues 672 to 674 (YNG) and 779 to 782 (TKKD) each bind ATP.

The protein belongs to the chloride channel (TC 2.A.49) family. ClC-3/CLCN3 subfamily. In terms of assembly, monomer and homodimer. Forms heterodimers with CLCN4. In terms of processing, N-glycosylated.

It is found in the early endosome membrane. Its subcellular location is the late endosome membrane. It localises to the lysosome membrane. The protein localises to the cell membrane. Strongly outwardly rectifying, electrogenic H(+)/Cl(-)exchanger which mediates the exchange of chloride ions against protons. The CLC channel family contains both chloride channels and proton-coupled anion transporters that exchange chloride or another anion for protons. The presence of conserved gating glutamate residues is typical for family members that function as antiporters. In Pongo abelii (Sumatran orangutan), this protein is H(+)/Cl(-) exchange transporter 3 (CLCN3).